A 393-amino-acid polypeptide reads, in one-letter code: L-rhamnonate dehydratase (393 aa).

The substrate site is built by histidine 22 and arginine 48. Positions 214, 241, and 269 each coordinate Mg(2+). Histidine 319 functions as the Proton acceptor in the catalytic mechanism. Position 339 (glutamate 339) interacts with substrate.

It belongs to the mandelate racemase/muconate lactonizing enzyme family. RhamD subfamily. As to quaternary structure, homooctamer; tetramer of dimers. Mg(2+) is required as a cofactor.

It catalyses the reaction L-rhamnonate = 2-dehydro-3-deoxy-L-rhamnonate + H2O. In terms of biological role, catalyzes the dehydration of L-rhamnonate to 2-keto-3-deoxy-L-rhamnonate (KDR). The protein is L-rhamnonate dehydratase of Azorhizobium caulinodans (strain ATCC 43989 / DSM 5975 / JCM 20966 / LMG 6465 / NBRC 14845 / NCIMB 13405 / ORS 571).